The primary structure comprises 124 residues: Fluoride-specific ion channel FluC (124 aa).

Helical transmembrane passes span 4–24 (LIFV…ISIF), 35–55 (FGTL…YALG), 62–82 (PEIK…FSTF), and 102–122 (IALN…LVFS). Residues Gly74 and Thr77 each contribute to the Na(+) site.

It belongs to the fluoride channel Fluc/FEX (TC 1.A.43) family.

The protein resides in the cell inner membrane. The enzyme catalyses fluoride(in) = fluoride(out). Na(+) is not transported, but it plays an essential structural role and its presence is essential for fluoride channel function. In terms of biological role, fluoride-specific ion channel. Important for reducing fluoride concentration in the cell, thus reducing its toxicity. This Shewanella loihica (strain ATCC BAA-1088 / PV-4) protein is Fluoride-specific ion channel FluC.